Here is a 207-residue protein sequence, read N- to C-terminus: Large ribosomal subunit protein uL4 (207 aa).

Residues Thr-48–Gly-85 form a disordered region. The segment covering Gly-60–Gly-71 has biased composition (basic residues).

The protein belongs to the universal ribosomal protein uL4 family. In terms of assembly, part of the 50S ribosomal subunit.

One of the primary rRNA binding proteins, this protein initially binds near the 5'-end of the 23S rRNA. It is important during the early stages of 50S assembly. It makes multiple contacts with different domains of the 23S rRNA in the assembled 50S subunit and ribosome. In terms of biological role, forms part of the polypeptide exit tunnel. In Bacillus subtilis (strain 168), this protein is Large ribosomal subunit protein uL4.